Here is a 1106-residue protein sequence, read N- to C-terminus: Communication mutant protein F (1106 aa).

Residues 1-28 form the signal peptide; the sequence is MKIYKKNHFLKILIIFIYLSCNILKVNA. Residues 254-380 enclose the G8 domain; the sequence is TIWPNGVVPS…YHNTWSKLAS (127 aa). Residues Asn-267, Asn-306, Asn-512, Asn-536, Asn-677, Asn-715, and Asn-833 are each glycosylated (N-linked (GlcNAc...) asparagine).

The protein belongs to the comF family.

The protein resides in the secreted. The polypeptide is Communication mutant protein F (comF-1) (Dictyostelium discoideum (Social amoeba)).